We begin with the raw amino-acid sequence, 37 residues long: Cortex morphogenetic protein A (37 aa).

In terms of assembly, can form a complex with SpoIVA and ClpX.

Its subcellular location is the forespore. Functionally, ensures proper spore envelope assembly. Represses premature cortex assembly until coat assembly successfully initiates. Also participates in a quality-control pathway that selectively removes defective sporulating cells through regulated cell death. Acts as an adaptator that delivers SpoIVA to the ClpXP proteolytic machinery for degradation, specifically in cells that improperly assemble the spore envelope. The protein is Cortex morphogenetic protein A of Bacillus subtilis (strain 168).